The sequence spans 248 residues: Octanoyltransferase (248 aa).

The BPL/LPL catalytic domain maps to 53 to 234; that stretch reads ADTVDEIWIV…RLIANLDGES (182 aa). Substrate contacts are provided by residues 93–100, 165–167, and 178–180; these read RGGQITYH, ALG, and GLS. Residue Cys196 is the Acyl-thioester intermediate of the active site.

It belongs to the LipB family.

The protein resides in the cytoplasm. The enzyme catalyses octanoyl-[ACP] + L-lysyl-[protein] = N(6)-octanoyl-L-lysyl-[protein] + holo-[ACP] + H(+). It participates in protein modification; protein lipoylation via endogenous pathway; protein N(6)-(lipoyl)lysine from octanoyl-[acyl-carrier-protein]: step 1/2. In terms of biological role, catalyzes the transfer of endogenously produced octanoic acid from octanoyl-acyl-carrier-protein onto the lipoyl domains of lipoate-dependent enzymes. Lipoyl-ACP can also act as a substrate although octanoyl-ACP is likely to be the physiological substrate. In Burkholderia multivorans (strain ATCC 17616 / 249), this protein is Octanoyltransferase.